The primary structure comprises 289 residues: Shikimate dehydrogenase (NADP(+)) (289 aa).

Shikimate-binding positions include serine 22–serine 24 and threonine 69. Lysine 73 functions as the Proton acceptor in the catalytic mechanism. Glutamate 85 is a binding site for NADP(+). Shikimate contacts are provided by asparagine 94 and aspartate 109. NADP(+)-binding positions include glycine 134–alanine 138, asparagine 158–arginine 163, and isoleucine 226. Tyrosine 228 lines the shikimate pocket. Residue glycine 249 participates in NADP(+) binding.

Belongs to the shikimate dehydrogenase family. In terms of assembly, homodimer.

The catalysed reaction is shikimate + NADP(+) = 3-dehydroshikimate + NADPH + H(+). Its pathway is metabolic intermediate biosynthesis; chorismate biosynthesis; chorismate from D-erythrose 4-phosphate and phosphoenolpyruvate: step 4/7. Functionally, involved in the biosynthesis of the chorismate, which leads to the biosynthesis of aromatic amino acids. Catalyzes the reversible NADPH linked reduction of 3-dehydroshikimate (DHSA) to yield shikimate (SA). The polypeptide is Shikimate dehydrogenase (NADP(+)) (Brucella canis (strain ATCC 23365 / NCTC 10854 / RM-666)).